A 310-amino-acid chain; its full sequence is Translocator protein BipD (310 aa).

2 coiled-coil regions span residues 127–171 (DPIL…LQDY) and 250–299 (DTAR…AIST).

Belongs to the invasin protein D family.

The protein localises to the secreted. In terms of biological role, required for invasion of epithelial cells, as well as for survival within host cells, escape from endocytic vesicles and subsequent actin-tail formation. Probably regulates the secretion of effectors BipB and BipC and their final integration into the target cell membrane. The protein is Translocator protein BipD (bipD) of Burkholderia mallei (strain NCTC 10247).